The following is a 252-amino-acid chain: Indole-3-glycerol phosphate synthase (252 aa).

It belongs to the TrpC family.

It catalyses the reaction 1-(2-carboxyphenylamino)-1-deoxy-D-ribulose 5-phosphate + H(+) = (1S,2R)-1-C-(indol-3-yl)glycerol 3-phosphate + CO2 + H2O. Its pathway is amino-acid biosynthesis; L-tryptophan biosynthesis; L-tryptophan from chorismate: step 4/5. The chain is Indole-3-glycerol phosphate synthase from Listeria welshimeri serovar 6b (strain ATCC 35897 / DSM 20650 / CCUG 15529 / CIP 8149 / NCTC 11857 / SLCC 5334 / V8).